Here is a 149-residue protein sequence, read N- to C-terminus: MEVIAENRKARFEYFILEEFEAGMVLLSSEVKSLRERKVNISDAYVTEKNGEIWLHNMHIAEYKAANKKKHKPKRERKLLLHKKEINKLISQIKTAGVTIVPLSIYFNDKGLVKTRIAIVKGKKLYDKRATIKQREWNRAKSRLSKNNL.

This sequence belongs to the SmpB family.

Its subcellular location is the cytoplasm. Its function is as follows. Required for rescue of stalled ribosomes mediated by trans-translation. Binds to transfer-messenger RNA (tmRNA), required for stable association of tmRNA with ribosomes. tmRNA and SmpB together mimic tRNA shape, replacing the anticodon stem-loop with SmpB. tmRNA is encoded by the ssrA gene; the 2 termini fold to resemble tRNA(Ala) and it encodes a 'tag peptide', a short internal open reading frame. During trans-translation Ala-aminoacylated tmRNA acts like a tRNA, entering the A-site of stalled ribosomes, displacing the stalled mRNA. The ribosome then switches to translate the ORF on the tmRNA; the nascent peptide is terminated with the 'tag peptide' encoded by the tmRNA and targeted for degradation. The ribosome is freed to recommence translation, which seems to be the essential function of trans-translation. In Wolbachia sp. subsp. Brugia malayi (strain TRS), this protein is SsrA-binding protein.